The following is a 256-amino-acid chain: Small ribosomal subunit protein eS1 (256 aa).

Ala-2 is subject to N-acetylalanine; partial.

It belongs to the eukaryotic ribosomal protein eS1 family. Component of the small ribosomal subunit. Mature ribosomes consist of a small (40S) and a large (60S) subunit. The 40S subunit contains about 33 different proteins and 1 molecule of RNA (18S). The 60S subunit contains about 49 different proteins and 3 molecules of RNA (25S, 5.8S and 5S).

It is found in the cytoplasm. This Postia placenta (strain ATCC 44394 / Madison 698-R) (Brown rot fungus) protein is Small ribosomal subunit protein eS1.